A 107-amino-acid chain; its full sequence is uncharacterized protein (107 aa).

The tract at residues 86 to 107 is disordered; that stretch reads KRAETARLPAATPQKRTGPARG.

This is an uncharacterized protein from Saccharomyces cerevisiae (strain ATCC 204508 / S288c) (Baker's yeast).